The sequence spans 1442 residues: DNA-binding protein RFX7 (1442 aa).

Residues 1–36 are disordered; it reads MEEEQQQQQQQQQAQKMQGTEQSAQLPPSAPGALPA. The segment at residues 112–187 is a DNA-binding region (RFX-type winged-helix); sequence AFSWIRNTLE…YCYSGLRKKA (76 aa). The PxLPxI/L motif motif lies at 192 to 197; the sequence is PSLPNL. Disordered regions lie at residues 406 to 426, 485 to 514, and 929 to 1001; these read MQSV…GDRS, SAGT…KNGS, and SVTP…SVPP. Pro residues predominate over residues 935–947; the sequence is TPTPTPTPTPTLT. Over residues 957–995 the composition is skewed to polar residues; it reads GTQSLSRESPCSRLAQTTPVDSALGSSRHTPVGTPHSNC.

It belongs to the RFX family.

It is found in the nucleus. Functionally, transcription factor. Acts as a transcriptional activator by binding to promoter regions of target genes. Plays a role in natural killer (NK) cell maintenance and immunity. Plays a role in the process of ciliogenesis in the neural tube and neural tube closure by regulating the expression of RFX4. This chain is DNA-binding protein RFX7, found in Xenopus laevis (African clawed frog).